Reading from the N-terminus, the 384-residue chain is MNKLLMVKYASEIFLKGLNKNKFEKILKHNIATALNGVKFDFVFDSGRWFIKGEDLEEVVDRVRNVFGVAEVCIVTEIENDFDTIKNQALLAVKESGKGTFKVETNRANKGFPLNSMDINREVGAYILKNNDEVKVDIHNPECLVNIEIRKKTYIYSKRIKGVNGMPYKTNGQTLLMLSGGIDSPVAGYMMARRGVEVSGVYFHSAPYTSERAKDKVKDLARILTKYIGEMTLYVVPFTDIQMQIIEKCREDELTIIMRRFMMSIACKIAEDKGMESVATGESIGQVASQTMQGLVVSNDCADRPVFRPLISMDKIDIMDISRKIGTYETSILPYEDCCTIFVPKHPKTKPILGQIRKAESVLDKEKLINDAVEKMEVIQIKND.

Positions 57-160 (EEVVDRVRNV…KKTYIYSKRI (104 aa)) constitute a THUMP domain. ATP contacts are provided by residues 177 to 178 (ML), 202 to 203 (YF), R259, G281, and Q290.

This sequence belongs to the ThiI family.

It localises to the cytoplasm. The catalysed reaction is [ThiI sulfur-carrier protein]-S-sulfanyl-L-cysteine + a uridine in tRNA + 2 reduced [2Fe-2S]-[ferredoxin] + ATP + H(+) = [ThiI sulfur-carrier protein]-L-cysteine + a 4-thiouridine in tRNA + 2 oxidized [2Fe-2S]-[ferredoxin] + AMP + diphosphate. It carries out the reaction [ThiS sulfur-carrier protein]-C-terminal Gly-Gly-AMP + S-sulfanyl-L-cysteinyl-[cysteine desulfurase] + AH2 = [ThiS sulfur-carrier protein]-C-terminal-Gly-aminoethanethioate + L-cysteinyl-[cysteine desulfurase] + A + AMP + 2 H(+). It participates in cofactor biosynthesis; thiamine diphosphate biosynthesis. Functionally, catalyzes the ATP-dependent transfer of a sulfur to tRNA to produce 4-thiouridine in position 8 of tRNAs, which functions as a near-UV photosensor. Also catalyzes the transfer of sulfur to the sulfur carrier protein ThiS, forming ThiS-thiocarboxylate. This is a step in the synthesis of thiazole, in the thiamine biosynthesis pathway. The sulfur is donated as persulfide by IscS. This is Probable tRNA sulfurtransferase from Clostridium acetobutylicum (strain ATCC 824 / DSM 792 / JCM 1419 / IAM 19013 / LMG 5710 / NBRC 13948 / NRRL B-527 / VKM B-1787 / 2291 / W).